Reading from the N-terminus, the 184-residue chain is Crossover junction endodeoxyribonuclease RuvC (184 aa).

Active-site residues include Asp-11, Glu-73, and Asp-147. Mg(2+) is bound by residues Asp-11, Glu-73, and Asp-147.

The protein belongs to the RuvC family. Homodimer which binds Holliday junction (HJ) DNA. The HJ becomes 2-fold symmetrical on binding to RuvC with unstacked arms; it has a different conformation from HJ DNA in complex with RuvA. In the full resolvosome a probable DNA-RuvA(4)-RuvB(12)-RuvC(2) complex forms which resolves the HJ. Requires Mg(2+) as cofactor.

It localises to the cytoplasm. It catalyses the reaction Endonucleolytic cleavage at a junction such as a reciprocal single-stranded crossover between two homologous DNA duplexes (Holliday junction).. In terms of biological role, the RuvA-RuvB-RuvC complex processes Holliday junction (HJ) DNA during genetic recombination and DNA repair. Endonuclease that resolves HJ intermediates. Cleaves cruciform DNA by making single-stranded nicks across the HJ at symmetrical positions within the homologous arms, yielding a 5'-phosphate and a 3'-hydroxyl group; requires a central core of homology in the junction. The consensus cleavage sequence is 5'-(A/T)TT(C/G)-3'. Cleavage occurs on the 3'-side of the TT dinucleotide at the point of strand exchange. HJ branch migration catalyzed by RuvA-RuvB allows RuvC to scan DNA until it finds its consensus sequence, where it cleaves and resolves the cruciform DNA. The polypeptide is Crossover junction endodeoxyribonuclease RuvC (Neisseria gonorrhoeae (strain ATCC 700825 / FA 1090)).